The following is a 141-amino-acid chain: Early nodulin-like protein 19 (141 aa).

The signal sequence occupies residues 1–26; that stretch reads MGRSMVLISAVVLAFLVAAPIPEVTA. The Phytocyanin domain maps to 27–127; it reads KKYLVGDKKF…GMKLDVLVET (101 aa). Residues Asn-42 and Asn-88 are each glycosylated (N-linked (GlcNAc...) asparagine). Residues Cys-80 and Cys-115 are joined by a disulfide bond.

This sequence belongs to the early nodulin-like (ENODL) family.

May act as a carbohydrate transporter. In Arabidopsis thaliana (Mouse-ear cress), this protein is Early nodulin-like protein 19.